The chain runs to 1487 residues: Collagen alpha-1(II) chain (1487 aa).

The signal sequence occupies residues 1–25 (MIRLGAPQTLVLLTLLVAAVLRCHG). Positions 26-181 (QDVQKAGSCV…PPGLGGNFAA (156 aa)) are cleaved as a propeptide — N-terminal propeptide. The VWFC domain occupies 32 to 90 (GSCVQDGQRYNDKDVWKPEPCRICVCDTGTVLCDDIICEDMKDCLSPETPFGECCPICS). Residues 96–1234 (ASGQPGPKGQ…GLGQREKGPD (1139 aa)) form a disordered region. 2 stretches are compositionally biased toward basic and acidic residues: residues 105–116 (QKGEPGDIKDIV) and 133–154 (PRGDRGDKGEKGAPGPRGRDGE). Pro residues predominate over residues 158 to 173 (PGNPGPPGPPGPPGPP). Lys-190 is modified (5-hydroxylysine). An O-linked (Gal...) hydroxylysine glycan is attached at Lys-190. The segment covering 192–203 (GGAQMGVMQGPM) has biased composition (low complexity). The segment at 201 to 1214 (GPMGPMGPRG…PGPPGPPGPP (1014 aa)) is triple-helical region. A compositionally biased stretch (pro residues) spans 208–217 (PRGPPGPAGA). Hydroxyproline occurs at positions 212, 218, 230, 233, 245, 248, 251, 260, 269, 278, 281, and 284. Positions 218 to 239 (PGPQGFQGNPGEPGEPGVSGPM) are enriched in low complexity. Positions 241 to 250 (PRGPPGPPGK) are enriched in pro residues. The segment covering 251 to 265 (PGDDGEAGKPGKSGE) has biased composition (basic and acidic residues). At Lys-287 the chain carries 5-hydroxylysine. O-linked (Gal...) hydroxylysine glycosylation occurs at Lys-287. Pro-293 is subject to Hydroxyproline. A 5-hydroxylysine modification is found at Lys-299. An O-linked (Gal...) hydroxylysine glycan is attached at Lys-299. Residue Pro-305 is modified to Hydroxyproline. Lys-308 carries the post-translational modification 5-hydroxylysine. A glycan (O-linked (Gal...) hydroxylysine) is linked at Lys-308. Over residues 310-320 (ESGSPGENGSP) the composition is skewed to low complexity. A hydroxyproline mark is found at Pro-314, Pro-320, Pro-329, Pro-350, Pro-356, Pro-365, Pro-368, and Pro-371. The segment covering 335–350 (TGPAGAAGARGNDGQP) has biased composition (low complexity). The segment covering 360–369 (GPAGGPGFPG) has biased composition (gly residues). Composition is skewed to low complexity over residues 370–382 (APGAKGEAGPTGA) and 391–431 (PRGE…AGAP). The residue at position 374 (Lys-374) is a 5-hydroxylysine. Lys-374 carries an O-linked (Gal...) hydroxylysine glycan. Residues Pro-395, Pro-398, Pro-401, Pro-410, and Pro-416 each carry the hydroxyproline modification. Lys-419 bears the 5-hydroxylysine mark. 4 positions are modified to hydroxyproline: Pro-425, Pro-431, Pro-434, and Pro-440. The span at 433 to 442 (FPGPRGPPGP) shows a compositional bias: pro residues. Position 452 is a 5-hydroxylysine (Lys-452). Residue Pro-458 is modified to Hydroxyproline. Lys-464 and Lys-470 each carry 5-hydroxylysine. A hydroxyproline mark is found at Pro-473, Pro-482, Pro-497, Pro-506, Pro-512, and Pro-518. Lys-527 is subject to 5-hydroxylysine. Position 530 is a hydroxyproline (Pro-530). Lys-542 is modified (5-hydroxylysine). Residues Pro-551, Pro-557, Pro-566, Pro-581, Pro-587, Pro-590, Pro-599, and Pro-605 each carry the hydroxyproline modification. A 5-hydroxylysine modification is found at Lys-608. O-linked (Gal...) hydroxylysine glycosylation is present at Lys-608. Pro-614 carries the hydroxyproline modification. Lys-620 is subject to 5-hydroxylysine. O-linked (Gal...) hydroxylysine glycosylation occurs at Lys-620. Residues 622 to 631 (LPGAPGLRGL) are compositionally biased toward low complexity. Hydroxyproline occurs at positions 623, 626, 632, 644, 659, and 668. Residues 656 to 667 (QGAPGPSGFQGL) are compositionally biased toward low complexity. Pro-670 carries the 3-hydroxyproline modification. 2 positions are modified to hydroxyproline: Pro-671 and Pro-674. Residues 721 to 736 (LPGTPGTDGPKGAAGP) show a composition bias toward low complexity. Residues 764 to 775 (KGDRGDVGEKGP) show a composition bias toward basic and acidic residues. 2 stretches are compositionally biased toward low complexity: residues 833–848 (AGFAGPPGADGQPGAK) and 877–913 (PTGVTGPKGARGAQGPPGATGFPGAAGRVGPPGSNGN). At Pro-907 the chain carries 3-hydroxyproline. Pro-908, Pro-914, and Pro-920 each carry 4-hydroxyproline. Residues 1069 to 1079 (APGPPGSPGPA) are compositionally biased toward pro residues. A compositionally biased stretch (low complexity) spans 1091-1109 (AGAQGPMGPAGPAGARGMP). The segment covering 1115 to 1129 (RGDKGETGEAGERGL) has biased composition (basic and acidic residues). Lys-1130 is modified (5-hydroxylysine). Lys-1130 carries an O-linked (Gal...) hydroxylysine glycan. Pro-1144 carries the post-translational modification 3-hydroxyproline. Residues 1148-1157 (SGDQGASGPA) show a composition bias toward low complexity. A 4-hydroxyproline modification is found at Pro-1181. Residue Pro-1186 is modified to 3-hydroxyproline. Pro-1187 bears the 4-hydroxyproline mark. The span at 1199–1216 (AGPPGNPGPPGPPGPPGP) shows a compositional bias: pro residues. Pro-1201 carries the post-translational modification 3-hydroxyproline. 2 positions are modified to 4-hydroxyproline: Pro-1202 and Pro-1205. A 3-hydroxyproline modification is found at Pro-1207. 4-hydroxyproline is present on residues Pro-1208 and Pro-1211. Pro-1213 bears the 3-hydroxyproline mark. Pro-1214 carries the 4-hydroxyproline modification. The interval 1215-1241 (GPGIDMSAFAGLGQREKGPDPLQYMRA) is nonhelical region (C-terminal). Residues 1253–1487 (AEVDATLKSL…GVDIGPVCFL (235 aa)) enclose the Fibrillar collagen NC1 domain. Intrachain disulfides connect Cys-1283-Cys-1315, Cys-1323-Cys-1485, and Cys-1393-Cys-1438. Ca(2+)-binding residues include Asp-1301, Asn-1303, Gln-1304, Cys-1306, and Asp-1309. Asn-1388 is a glycosylation site (N-linked (GlcNAc...) asparagine).

Belongs to the fibrillar collagen family. Homotrimers of alpha 1(II) chains. Post-translationally, probably 3-hydroxylated on prolines by LEPREL1. Proline residues at the third position of the tripeptide repeating unit (G-X-P) are hydroxylated in some or all of the chains. Proline residues at the second position of the tripeptide repeating unit (G-P-X) are hydroxylated in some of the chains. In terms of processing, O-linked glycans consist of Glc-Gal disaccharides bound to the oxygen atom of post-translationally added hydroxyl groups. Contains mostly 4-hydroxyproline. Prolines at the third position of the tripeptide repeating unit (G-X-P) are 4-hydroxylated in some or all of the chains. Post-translationally, contains 3-hydroxyproline at a few sites. This modification occurs on the first proline residue in the sequence motif Gly-Pro-Hyp, where Hyp is 4-hydroxyproline. In terms of processing, lysine residues at the third position of the tripeptide repeating unit (G-X-Y) are 5-hydroxylated in some or all of the chains. O-glycosylated on hydroxylated lysine residues. The O-linked glycan consists of a Glc-Gal disaccharide.

Its subcellular location is the secreted. The protein localises to the extracellular space. The protein resides in the extracellular matrix. Its function is as follows. Type II collagen is specific for cartilaginous tissues. It is essential for the normal embryonic development of the skeleton, for linear growth and for the ability of cartilage to resist compressive forces. The sequence is that of Collagen alpha-1(II) chain from Bos taurus (Bovine).